The following is a 443-amino-acid chain: Autophagy-related protein 13 homolog (443 aa).

2 disordered regions span residues 232 to 283 (AKKR…EEDH) and 308 to 333 (ANGT…KEPT). Over residues 240–253 (SVESATSAGSSTSR) the composition is skewed to polar residues. The span at 268–283 (EDSRHSDVQNSYEEDH) shows a compositional bias: basic and acidic residues. A compositionally biased stretch (polar residues) spans 308–325 (ANGTKKNSSSTCLNSPKS).

It belongs to the ATG13 family. Metazoan subfamily. Interacts with unc-51 (via C-terminus). Interacts with lgg-1; the interaction is direct.

Its subcellular location is the cytoplasm. It is found in the cytosol. The protein resides in the preautophagosomal structure. It localises to the perikaryon. The protein localises to the cell projection. Its subcellular location is the axon. Component of the unc-51/atg-13 complex required for autophagosome formation. Required for the degradation of germ cell specific P-granule components such as sepa-1 by autophagy in somatic cells. This ensures exclusive localization of the P-granules in germ cells. May function downstream of the let-363 (Tor) signaling pathway to mediate sepa-1 degradation. Plays a role in survival during limited food availability. This chain is Autophagy-related protein 13 homolog, found in Caenorhabditis elegans.